A 77-amino-acid chain; its full sequence is Acyl carrier protein (77 aa).

A Carrier domain is found at 1-76 (MADFEKVKSI…DVTKFIDNLK (76 aa)). Ser-36 is subject to O-(pantetheine 4'-phosphoryl)serine.

The protein belongs to the acyl carrier protein (ACP) family. In terms of processing, 4'-phosphopantetheine is transferred from CoA to a specific serine of apo-ACP by AcpS. This modification is essential for activity because fatty acids are bound in thioester linkage to the sulfhydryl of the prosthetic group.

The protein resides in the cytoplasm. Its pathway is lipid metabolism; fatty acid biosynthesis. Carrier of the growing fatty acid chain in fatty acid biosynthesis. This chain is Acyl carrier protein, found in Leptospira borgpetersenii serovar Hardjo-bovis (strain JB197).